A 123-amino-acid polypeptide reads, in one-letter code: Small ribosomal subunit protein uS12 (123 aa).

The residue at position 89 (D89) is a 3-methylthioaspartic acid.

It belongs to the universal ribosomal protein uS12 family. Part of the 30S ribosomal subunit. Contacts proteins S8 and S17. May interact with IF1 in the 30S initiation complex.

In terms of biological role, with S4 and S5 plays an important role in translational accuracy. Its function is as follows. Interacts with and stabilizes bases of the 16S rRNA that are involved in tRNA selection in the A site and with the mRNA backbone. Located at the interface of the 30S and 50S subunits, it traverses the body of the 30S subunit contacting proteins on the other side and probably holding the rRNA structure together. The combined cluster of proteins S8, S12 and S17 appears to hold together the shoulder and platform of the 30S subunit. The chain is Small ribosomal subunit protein uS12 from Methylobacterium radiotolerans (strain ATCC 27329 / DSM 1819 / JCM 2831 / NBRC 15690 / NCIMB 10815 / 0-1).